The sequence spans 182 residues: Nucleoside-triphosphatase THEP1 (182 aa).

Residues 10–17 and 102–109 contribute to the ATP site; these read GRPGIGKT and VVVIDEIG.

Belongs to the THEP1 NTPase family.

It catalyses the reaction a ribonucleoside 5'-triphosphate + H2O = a ribonucleoside 5'-diphosphate + phosphate + H(+). Its function is as follows. Has nucleotide phosphatase activity towards ATP, GTP, CTP, TTP and UTP. May hydrolyze nucleoside diphosphates with lower efficiency. This chain is Nucleoside-triphosphatase THEP1, found in Thermofilum pendens (strain DSM 2475 / Hrk 5).